Here is a 224-residue protein sequence, read N- to C-terminus: MKIVVKVGGSAIVQGLDAQRFKDYADVIKQLAEDHTILIVIGGGTPARDYINVSKQLGANNSILDYIGIGVSRLNARLLISALGDIAYPEPPYDYKDAGLAMYSGKVVVMGGVVPGQTTDAVAAILAEYVHADLLIRTTSVDGVFTADPKLDPKATKIDSMTPQELVDMVTKIEMTAGANNIFDPLGAQIVKRSRIPTVVVNGKQPENLIKAVKGEPIGTIIKE.

9 to 10 (GS) contributes to the ATP binding site. Gly43 lines the UMP pocket. Positions 44 and 48 each coordinate ATP. UMP contacts are provided by residues Asp65 and 113 to 119 (VVPGQTT). ATP contacts are provided by Thr139, Phe145, and Asp148.

The protein belongs to the UMP kinase family. In terms of assembly, homohexamer.

Its subcellular location is the cytoplasm. It catalyses the reaction UMP + ATP = UDP + ADP. It participates in pyrimidine metabolism; CTP biosynthesis via de novo pathway; UDP from UMP (UMPK route): step 1/1. Inhibited by UTP. In terms of biological role, catalyzes the reversible phosphorylation of UMP to UDP. The protein is Uridylate kinase of Methanocella arvoryzae (strain DSM 22066 / NBRC 105507 / MRE50).